The chain runs to 101 residues: UPF0473 protein str1961 (101 aa).

This sequence belongs to the UPF0473 family.

This is UPF0473 protein str1961 from Streptococcus thermophilus (strain CNRZ 1066).